We begin with the raw amino-acid sequence, 500 residues long: NAD(P)H-quinone oxidoreductase chain 4, chloroplastic (500 aa).

Transmembrane regions (helical) follow at residues 4–24 (FPWLTLIVVLPISAGSLIFFL), 37–57 (IFICMLELLLTTYVFCYHFQL), 87–107 (IGPILLTGFITTLATLAAWPV), 113–130 (LFHFLMLAMYSGQIGSFS), 134–154 (LLLFFIMWELELIPVYLLLSM), 167–187 (FILYTAGGSIFLLLGVLGIGL), 208–228 (ALEIIFYIGFFIAFAVKSPII), 242–262 (HYSTCMLLAGILLKMGAYGLV), 272–292 (AHSIFSPWLVVVGTMQIIYAA), 305–325 (IAYSSVSHMGFIIIGIGSITD), 330–350 (GAILQIISHGFLGAALFFLAG), 386–406 (LALPGMSGFVAELIVFFGIIT), 416–436 (ILITFVMAIGMILTPIYSLSM), and 462–482 (LFVLISIFLPVIGIGIYPDFV).

It belongs to the complex I subunit 4 family.

It localises to the plastid. Its subcellular location is the chloroplast thylakoid membrane. It catalyses the reaction a plastoquinone + NADH + (n+1) H(+)(in) = a plastoquinol + NAD(+) + n H(+)(out). It carries out the reaction a plastoquinone + NADPH + (n+1) H(+)(in) = a plastoquinol + NADP(+) + n H(+)(out). The sequence is that of NAD(P)H-quinone oxidoreductase chain 4, chloroplastic from Vitis vinifera (Grape).